A 237-amino-acid polypeptide reads, in one-letter code: Early nodulin-like protein 1 (237 aa).

Positions 1 to 28 (MEASRRWPYAAWFMAVLGLVAVFSSSEA) are cleaved as a signal peptide. Residues 29–134 (YVFYAGGRDG…GQKLYIIVMA (106 aa)) form the Phytocyanin domain. Asn59 carries an N-linked (GlcNAc...) asparagine glycan. Cys85 and Cys122 are disulfide-bonded. The interval 139–215 (KPSEAPEPAG…SLGAPPPTSG (77 aa)) is disordered. Low complexity-rich tracts occupy residues 140-152 (PSEA…AAGP) and 201-215 (MSRS…PTSG). Ser206 is lipidated: GPI-anchor amidated serine. A propeptide spans 207–237 (LGAPPPTSGAAGLAGVVASVVVGVLGALLMF) (removed in mature form).

It belongs to the early nodulin-like (ENODL) family. As to expression, expressed ubiquitously. Accumulates particularly in reproductive tissues, especially in maturing seeds.

It localises to the vacuole. It is found in the aleurone grain membrane. Functionally, may act as a carbohydrate transporter. The polypeptide is Early nodulin-like protein 1 (Oryza sativa subsp. japonica (Rice)).